We begin with the raw amino-acid sequence, 732 residues long: MGRREEMIAKIKELMLQPERIRNIGIAAHIDHGKTTLSDNLLAGAGMISEELAGKQLVLDFDEQEQARGITINAANVSMVHNYEGKDYLINLIDTPGHVDFGGDVTRAMRAIDGVIIVVDAVEGVMPQTETVVRQALREYVKPVLFINKVDRLIRELKLTPQQMMERFSKIIMDVNRLIQRYAPEEYKKQWMVKVEDGSVAFGSAYYNWALSVPFMKRTGVKFNEIIDLTLKGDHKTLRQKAPLHVVVLDMVVKHLPNPIEAQKYRIPHLWQGDINSDVGQAMLNCDPKGKMVMVVTKIIIDKHAGEVATGRVWSGTVKSGQEVYLINTKRKARIQQVGIYMGPERINMEAVPAGNIVAVTGLRDAMAGETVAEEPIEPFEALHYVSEPVVTVAIEAKNVKDLPRLIEALRQLAKEDPTLHVKIDEETGQHLLSGMGELHLEVKLYKLKKDWGIDIDVSEPIVVYRESITKPSPMVEGKSPNRHNRFYIVVEPMPDEIYNAIKEGIIPEGRIKNPKEVAKKLAELGMDYEIARGIVDVYNGNMFLDNTKGVQYLNEVMDLLIDGFHQAMDEGPLAKEPVMKVIVRLIDAQVHEDNVHRGPAQIYPAIRTAIHCAMMKSNPVLYEPYQKVIINIPYEYMGAVSREITQRRGQLVDMKQEGEVMTIIAEAPVAEMFGFAGAIRSATSGRALWSTEHAGFKRVPNELAQQIIRQIRQRKGLDPNPPTEKDVCPLF.

Positions 19–260 constitute a tr-type G domain; it reads ERIRNIGIAA…MVVKHLPNPI (242 aa). Residues 28–35, 94–98, and 148–151 each bind GTP; these read AHIDHGKT, DTPGH, and NKVD. His-597 is modified (diphthamide).

This sequence belongs to the TRAFAC class translation factor GTPase superfamily. Classic translation factor GTPase family. EF-G/EF-2 subfamily.

The protein resides in the cytoplasm. Its function is as follows. Catalyzes the GTP-dependent ribosomal translocation step during translation elongation. During this step, the ribosome changes from the pre-translocational (PRE) to the post-translocational (POST) state as the newly formed A-site-bound peptidyl-tRNA and P-site-bound deacylated tRNA move to the P and E sites, respectively. Catalyzes the coordinated movement of the two tRNA molecules, the mRNA and conformational changes in the ribosome. This chain is Elongation factor 2 (fusA), found in Pyrococcus abyssi (strain GE5 / Orsay).